The following is a 932-amino-acid chain: Probable UDP-N-acetylglucosamine--peptide N-acetylglucosaminyltransferase SPINDLY (932 aa).

Positions 1–15 are enriched in basic and acidic residues; sequence MAWTEKDVENGKESD. A disordered region spans residues 1 to 39; the sequence is MAWTEKDVENGKESDSLGNNGFLKGVQSSSDSKGSPVRI. TPR repeat units follow at residues 48–81, 82–115, 116–149, 157–190, 191–224, 225–258, 266–299, 300–333, 334–367, 369–401, and 402–435; these read GKDAITYANILRSRNKFVDALAIYESVLQKDSGS, IESLIGKGICLQMQNMGRLAFESFAEAIKLDPQN, ACALTHCGILYKDEGRLVEAAESYQKALKADPSY, AIVLTDIGTSLKLAGNSQEGIQKYYEAIKIDSHY, APAYYNLGVVYSEMMQYDMALNCYEKAAIERPMY, AEAYCNMGVIYKNRGDLESAIACYERCLAVSPNF, AIALTDLGTKVKLEGDINQGVAYYKKALYYNWHY, ADAMYNLGVAYGEMLKFDMAIVFYELAFHFNPHC, AEACNNLGVIYKDRDNLDKAVECYQMALTIKPNF, QSLNNLGVVYTVQGKMDAAASMIEKAIIANPTY, and AEAYNNLGVLYRDAGNISLAIEAYEQCLKIDPDS. Residues 436–932 form a catalytic region region; sequence RNAGQNRLLA…NQAGNPGKQS (497 aa). The segment at 881–902 is disordered; that stretch reads VSPIEKTRISASKDGPIKENGF.

It belongs to the glycosyltransferase 41 family. O-GlcNAc transferase subfamily. In terms of tissue distribution, expressed in stems, leaves and flowers. Expressed during all stages of corolla maturation.

The protein localises to the nucleus. It catalyses the reaction L-seryl-[protein] + UDP-N-acetyl-alpha-D-glucosamine = 3-O-(N-acetyl-beta-D-glucosaminyl)-L-seryl-[protein] + UDP + H(+). The enzyme catalyses L-threonyl-[protein] + UDP-N-acetyl-alpha-D-glucosamine = 3-O-(N-acetyl-beta-D-glucosaminyl)-L-threonyl-[protein] + UDP + H(+). The protein operates within protein modification; protein glycosylation. Its function is as follows. Probable O-linked N-acetylglucosamine transferase (OGT) involved in various processes such as gibberellin (GA) signaling pathway. OGTs catalyze the addition of nucleotide-activated sugars directly onto the polypeptide through O-glycosidic linkage with the hydroxyl of serine or threonine. Probably acts by adding O-linked sugars to yet unknown proteins. This Petunia hybrida (Petunia) protein is Probable UDP-N-acetylglucosamine--peptide N-acetylglucosaminyltransferase SPINDLY (SPY).